Here is a 456-residue protein sequence, read N- to C-terminus: RuvB-like 1 (456 aa).

Lys-2 is covalently cross-linked (Glycyl lysine isopeptide (Lys-Gly) (interchain with G-Cter in SUMO2)). 70–77 (GPPGTGKT) contacts ATP. A Glycyl lysine isopeptide (Lys-Gly) (interchain with G-Cter in SUMO1); alternate cross-link involves residue Lys-225. Lys-225 participates in a covalent cross-link: Glycyl lysine isopeptide (Lys-Gly) (interchain with G-Cter in SUMO2); alternate. Residue Lys-445 forms a Glycyl lysine isopeptide (Lys-Gly) (interchain with G-Cter in SUMO2) linkage. Lys-453 bears the N6-acetyllysine mark.

Belongs to the RuvB family. As to quaternary structure, forms homohexameric rings. Can form a dodecamer with RUVBL2 made of two stacked hexameric rings; however, even though RUVBL1 and RUVBL2 are present in equimolar ratio, the oligomeric status of each hexamer is not known. Oligomerization may regulate binding to nucleic acids and conversely, binding to nucleic acids may affect the dodecameric assembly. Interaction of the complex with DHX34 results in conformational changes of the N-terminus of the RUVBL2 subunits, resulting in loss of nucleotide binding ability and ATP hydrolysis of the complex. Interacts with the transcriptional activation domain of MYC. Component of the RNA polymerase II holoenzyme complex. May also act to bridge the LEF1/TCF1-CTNNB1 complex and TBP. Component of the NuA4 histone acetyltransferase complex which contains the catalytic subunit KAT5/TIP60 and the subunits EP400, TRRAP/PAF400, BRD8/SMAP, EPC1, DMAP1/DNMAP1, RUVBL1/TIP49, RUVBL2, ING3, actin, ACTL6A/BAF53A, MORF4L1/MRG15, MORF4L2/MRGX, MRGBP, YEATS4/GAS41, VPS72/YL1 and MEAF6. The NuA4 complex interacts with MYC and the adenovirus E1A protein. RUVBL1 interacts with EP400. Component of a NuA4-related complex which contains EP400, TRRAP/PAF400, SRCAP, BRD8/SMAP, EPC1, DMAP1/DNMAP1, RUVBL1/TIP49, RUVBL2, actin, ACTL6A/BAF53A, VPS72 and YEATS4/GAS41. Component of the BAF53 complex, at least composed of ACTL6A/BAF53A, RUVBL1/TIP49, SMARCA2/BRM, and TRRAP/PAF400. Component of some MLL1/MLL complex, at least composed of the core components KMT2A/MLL1, ASH2L, HCFC1/HCF1, WDR5 and RBBP5, as well as the facultative components BACC1, CHD8, E2F6, HSP70, INO80C, KANSL1, LAS1L, MAX, MCRS1, MGA, MYST1/MOF, PELP1, PHF20, PRP31, RING2, RUVB1/TIP49A, RUVB2/TIP49B, SENP3, TAF1, TAF4, TAF6, TAF7, TAF9 and TEX10. Associates with alpha and gamma tubulins, particularly during metaphase and early anaphase. Interacts with NPAT. Component of the chromatin-remodeling INO80 complex; specifically part of a complex module associated with the helicase ATP-binding and the helicase C-terminal domain of INO80. Interacts with IGHMBP2. Interacts with OFD1. Interacts with HINT1. Component of a complex with USP49 and PSMC5. Component of a SWR1-like complex. Component of the R2TP complex composed at least of RUVBL1, RUVBL2, RPAP3 and PIHD1. Component of the PAQosome complex which is responsible for the biogenesis of several protein complexes and which consists of R2TP complex members RUVBL1, RUVBL2, RPAP3 and PIH1D1, URI complex members PFDN2, PFDN6, PDRG1, UXT and URI1 as well as ASDURF, POLR2E and DNAAF10/WDR92. Interacts with PIH1D1. Interacts with ITFG1. Interacts with WAC; WAC positively regulates MTOR activity by promoting the assembly of the TTT complex composed of TELO2, TTI1 and TTI2 and the RUVBL complex composed of RUVBL1 and RUVBL2 into the TTT-RUVBL complex which leads to the dimerization of the mTORC1 complex and its subsequent activation. The RUVBL1/RUVBL2 complex interacts with ZNHIT1 (via HIT-type zinc finger), ZNHIT3 (via HIT-type zinc finger), ZNHIT6 (via HIT-type zinc finger) and DDX59/ZNHIT5 (via HIT-type zinc finger) in the presence of ADP. Interacts with NOPCHAP1; the interaction is direct and disrupted upon ATP binding. Interacts with SMG1. Interacts with NOP2, NOP56 and NUFIP1.

Its subcellular location is the nucleus matrix. It is found in the nucleus. The protein localises to the nucleoplasm. The protein resides in the cytoplasm. It localises to the membrane. Its subcellular location is the cytoskeleton. It is found in the microtubule organizing center. The protein localises to the centrosome. The protein resides in the dynein axonemal particle. It carries out the reaction ATP + H2O = ADP + phosphate + H(+). Its function is as follows. Possesses single-stranded DNA-stimulated ATPase and ATP-dependent DNA helicase (3' to 5') activity; hexamerization is thought to be critical for ATP hydrolysis and adjacent subunits in the ring-like structure contribute to the ATPase activity. Component of the NuA4 histone acetyltransferase complex which is involved in transcriptional activation of select genes principally by acetylation of nucleosomal histones H4 and H2A. This modification may both alter nucleosome-DNA interactions and promote interaction of the modified histones with other proteins which positively regulate transcription. This complex may be required for the activation of transcriptional programs associated with oncogene and proto-oncogene mediated growth induction, tumor suppressor mediated growth arrest and replicative senescence, apoptosis, and DNA repair. The NuA4 complex ATPase and helicase activities seem to be, at least in part, contributed by the association of RUVBL1 and RUVBL2 with EP400. NuA4 may also play a direct role in DNA repair when recruited to sites of DNA damage. Component of a SWR1-like complex that specifically mediates the removal of histone H2A.Z/H2AZ1 from the nucleosome. Proposed core component of the chromatin remodeling INO80 complex which exhibits DNA- and nucleosome-activated ATPase activity and catalyzes ATP-dependent nucleosome sliding. Plays an essential role in oncogenic transformation by MYC and also modulates transcriptional activation by the LEF1/TCF1-CTNNB1 complex. Essential for cell proliferation. May be able to bind plasminogen at cell surface and enhance plasminogen activation. The sequence is that of RuvB-like 1 (Ruvbl1) from Mus musculus (Mouse).